A 587-amino-acid chain; its full sequence is Bifunctional lycopene cyclase/phytoene synthase (587 aa).

The tract at residues 1–236 (MGLDYILVHV…IVFGLVCIDY (236 aa)) is lycopene beta-cyclase. 7 helical membrane-spanning segments follow: residues 5-25 (YILVHVTYNIPLAGILTLVYW), 35-55 (KISTLVIISLVATIPWDSYLV), 65-85 (NGVIGWTLYDIPSEEVFFFII), 91-111 (SLVYLILTRWLVLPMYLGTVA), 116-136 (LIGASILLLAISVGLIALCFG), 145-165 (IITWAGPFLLIQWVFSSGFII), and 218-238 (LFFLITNIVIVFGLVCIDYAI). A phytoene synthase region spans residues 243–587 (CELVQSPQAV…VAYRAMAWRK (345 aa)).

The protein in the N-terminal section; belongs to the lycopene beta-cyclase family. It in the C-terminal section; belongs to the phytoene/squalene synthase family.

The protein resides in the membrane. The catalysed reaction is all-trans-lycopene = gamma-carotene. It catalyses the reaction gamma-carotene = all-trans-beta-carotene. It carries out the reaction 2 (2E,6E,10E)-geranylgeranyl diphosphate = 15-cis-phytoene + 2 diphosphate. It participates in carotenoid biosynthesis; beta-carotene biosynthesis. The protein operates within carotenoid biosynthesis; phytoene biosynthesis; all-trans-phytoene from geranylgeranyl diphosphate: step 1/1. Bifunctional enzyme that catalyzes the reactions from geranylgeranyl diphosphate to phytoene (phytoene synthase) and lycopene to beta-carotene via the intermediate gamma-carotene (lycopene cyclase). The protein is Bifunctional lycopene cyclase/phytoene synthase of Aspergillus oryzae (strain ATCC 42149 / RIB 40) (Yellow koji mold).